A 51-amino-acid chain; its full sequence is MTTSSNRPTPGGPTQPVSYPVFTVRWLAVHALTVPTIFFLGALAAMQFIQR.

A helical membrane pass occupies residues 26–42; the sequence is WLAVHALTVPTIFFLGA. His30 is a binding site for heme.

It belongs to the PsbE/PsbF family. Heterodimer of an alpha subunit and a beta subunit. PSII is composed of 1 copy each of membrane proteins PsbA, PsbB, PsbC, PsbD, PsbE, PsbF, PsbH, PsbI, PsbJ, PsbK, PsbL, PsbM, PsbT, PsbX, Psb30/Ycf12, peripheral proteins PsbO, CyanoQ (PsbQ), PsbU, PsbV and a large number of cofactors. It forms dimeric complexes. It depends on heme b as a cofactor.

The protein resides in the cell inner membrane. This b-type cytochrome is tightly associated with the reaction center of photosystem II (PSII). PSII is a light-driven water:plastoquinone oxidoreductase that uses light energy to abstract electrons from H(2)O, generating O(2) and a proton gradient subsequently used for ATP formation. It consists of a core antenna complex that captures photons, and an electron transfer chain that converts photonic excitation into a charge separation. The polypeptide is Cytochrome b559 subunit beta (Gloeobacter violaceus (strain ATCC 29082 / PCC 7421)).